The sequence spans 423 residues: Methanol:N,N-dimethyl-4-nitrosoaniline oxidoreductase (423 aa).

This sequence belongs to the iron-containing alcohol dehydrogenase family. In terms of assembly, homodecamer. The cofactor is Mg(2+). Zn(2+) serves as cofactor. Requires NADPH as cofactor.

It catalyses the reaction methanol + A = formaldehyde + AH2. Functionally, catalyzes the oxidation of methanol to yield formaldehyde. While the in vivo electron acceptor is not known, N,N-dimethyl-4-nitrosoaniline (NDMA) can serve this function in vitro and is reduced to 4-(hydroxylamino)-N,N-dimethylaniline. The protein is Methanol:N,N-dimethyl-4-nitrosoaniline oxidoreductase (thcE) of Rhodococcus erythropolis (Arthrobacter picolinophilus).